The sequence spans 285 residues: Putative cysteine-rich repeat secretory protein 14 (285 aa).

A signal peptide spans 1-30 (MSSFCLSKHLILVPILVMMAQLLLIRNVLS). Gnk2-homologous domains follow at residues 37–143 (YLYH…SIST) and 161–273 (RPNA…RYPF).

It belongs to the cysteine-rich repeat secretory protein family.

It is found in the secreted. This Arabidopsis thaliana (Mouse-ear cress) protein is Putative cysteine-rich repeat secretory protein 14 (CRRSP14).